The chain runs to 580 residues: High affinity choline transporter 1 (580 aa).

Over 1–6 the chain is Extracellular; that stretch reads MSFHVE. The chain crosses the membrane as a helical span at residues 7–27; that stretch reads GLVAIILFYLLIFLVGIWAAW. Over 28–48 the chain is Cytoplasmic; it reads KTKNSGNPEERSEAIIVGGRD. A helical transmembrane segment spans residues 49-69; the sequence is IGLLVGGFTMTATWVGGGYIN. Topologically, residues 70 to 81 are extracellular; that stretch reads GTAEAVYGPGCG. A helical transmembrane segment spans residues 82–102; the sequence is LAWAQAPIGYSLSLILGGLFF. Residues 103–125 are Cytoplasmic-facing; it reads AKPMRSKGYVTMLDPFQQIYGKR. The helical transmembrane segment at 126 to 146 threads the bilayer; that stretch reads MGGLLFIPALMGEMFWAAAIF. Topologically, residues 147–164 are extracellular; sequence SALGATISVIIDVDVNIS. A helical transmembrane segment spans residues 165–185; sequence VIVSALIAILYTLVGGLYSVA. Over 186–191 the chain is Cytoplasmic; the sequence is YTDVVQ. The chain crosses the membrane as a helical span at residues 192 to 212; the sequence is LFCIFIGLWISVPFALSHPAV. Residues 213–237 lie on the Extracellular side of the membrane; sequence TDIGFTAVHAKYQSPWLGTIESVEV. A helical transmembrane segment spans residues 238–258; the sequence is YTWLDNFLLLMLGGIPWQAYF. Residues 259–274 lie on the Cytoplasmic side of the membrane; that stretch reads QRVLSSSSATYAQVLS. The helical transmembrane segment at 275-295 threads the bilayer; the sequence is FLAAFGCLVMALPAICIGAIG. The Extracellular segment spans residues 296–317; it reads ASTDWNQTAYGYPDPKTKEEAD. N-linked (GlcNAc...) asparagine glycosylation occurs at Asn-301. The helical transmembrane segment at 318–338 threads the bilayer; the sequence is MILPIVLQYLCPVYISFFGLG. Topologically, residues 339-376 are cytoplasmic; it reads AVSAAVMSSADSSILSASSMFARNIYQLSFRQNASDKE. The helical transmembrane segment at 377 to 397 threads the bilayer; the sequence is IVWVMRITVLVFGASATAMAL. At 398–406 the chain is on the extracellular side; it reads LTKTVYGLW. A helical transmembrane segment spans residues 407–427; that stretch reads YLSSDLVYIIIFPQLLCVLFI. The Cytoplasmic segment spans residues 428-435; it reads KGTNTYGA. Residues 436–456 traverse the membrane as a helical segment; that stretch reads VAGYIFGLFLRITGGEPYLYL. The Extracellular segment spans residues 457–481; it reads QPLIFYPGYYSDKNGIYNQRFPFKT. The chain crosses the membrane as a helical span at residues 482 to 502; the sequence is LSMVTSFFTNICVSYLAKYLF. The mediates interaction with SEC14L1 stretch occupies residues 502-580; sequence FESGTLPPKL…EGSGTEDNLQ (79 aa). The Cytoplasmic portion of the chain corresponds to 503-580; sequence ESGTLPPKLD…EGSGTEDNLQ (78 aa). The Dileucine-like motif motif lies at 527–532; that stretch reads DKTILV.

Belongs to the sodium:solute symporter (SSF) (TC 2.A.21) family. In terms of assembly, homooligomerizes at cell surface. Interacts with SEC14L1; may regulate SLC5A7. Post-translationally, phosphorylated by PKC and dephosphorylated by PP1/PP2A. In terms of tissue distribution, found in spinal cord, brain-stem, mid-brain and striatum. Specific for cholinergic neurons.

Its subcellular location is the presynaptic cell membrane. It is found in the cell projection. It localises to the axon. The protein localises to the early endosome membrane. The protein resides in the cytoplasmic vesicle. Its subcellular location is the secretory vesicle. It is found in the synaptic vesicle membrane. The enzyme catalyses choline(out) + n Na(+)(out) = choline(in) + n Na(+)(in). With respect to regulation, choline uptake activity is regulated by SLC5A7/CHT1 internalization (inactive form) from the cell surface and recycling of internalized SLC5A7/CHT1 into the cell surface (active form). Activated by extracellular chloride ion. Specifically inhibited by nanomolar concentrations of hemicholinium 3. In terms of biological role, high-affinity Na(+)-coupled choline transmembrane symporter. Functions as an electrogenic, voltage-dependent transporter with variable charge/choline stoichiometry. Choline uptake and choline-induced current is also Cl(-)-dependent where Cl(-) is likely a regulatory ion rather than cotransported ion. Plays a critical role in acetylcholine (ACh) synthesis by taking up the substrate choline from the synaptic cleft into the presynaptic nerve terminals after neurotransmitter release. SLC5A7/CHT1-mediated choline high-affinity transport in cholinergic neurons is the rate-limiting step for production of ACh, thereby facilitating communication by subsequent action potentials. Localized predominantly in presynaptic terminal intracellular organelles, and translocated to the plasma membrane in active form in response to neuronal activity. The protein is High affinity choline transporter 1 of Mus musculus (Mouse).